The primary structure comprises 281 residues: Cell division protein DivIB (281 aa).

The tract at residues M1 to L36 is disordered. Over M1–G46 the chain is Cytoplasmic. Basic and acidic residues predominate over residues R8 to K31. The chain crosses the membrane as a helical span at residues L47 to V69. At S70–S281 the chain is on the extracellular side. The POTRA domain maps to A73 to R144.

This sequence belongs to the FtsQ/DivIB family. DivIB subfamily.

The protein localises to the cell membrane. Its function is as follows. Cell division protein that may be involved in stabilizing or promoting the assembly of the division complex. The sequence is that of Cell division protein DivIB from Lactobacillus delbrueckii subsp. bulgaricus (strain ATCC 11842 / DSM 20081 / BCRC 10696 / JCM 1002 / NBRC 13953 / NCIMB 11778 / NCTC 12712 / WDCM 00102 / Lb 14).